The sequence spans 617 residues: KIF-binding protein (617 aa).

A disordered region spans residues 48–83 (ALLGPAPEDDDERAADDGPVDQALGAGEPRDAEGPG). The residue at position 174 (Ser-174) is a Phosphoserine.

The protein belongs to the KIF-binding protein family. In terms of assembly, interacts with KIF1B; positively regulates KIF1B microtubule motor activity. Interacts with STMN2.

The protein resides in the cytoplasm. Its subcellular location is the cytoskeleton. Activator of KIF1B plus-end-directed microtubule motor activity. Required for organization of axonal microtubules, and axonal outgrowth and maintenance during peripheral and central nervous system development. The polypeptide is KIF-binding protein (Kifbp) (Rattus norvegicus (Rat)).